The chain runs to 158 residues: Ecotin-like protein 2 (158 aa).

The protein belongs to the protease inhibitor I11 (ecotin) family.

This chain is Ecotin-like protein 2, found in Leishmania major.